Reading from the N-terminus, the 373-residue chain is SAM domain-containing protein SAMSN-1 (373 aa).

The tract at residues 1-72 (MLKRKPSNVS…GGGLGKKMRA (72 aa)) is disordered. An Important for interaction with 14-3-3 proteins motif is present at residues 20–25 (RSSSFG). Phosphoserine is present on residues Ser-23 and Ser-34. Over residues 37 to 48 (KPDDSTEAHEGD) the composition is skewed to basic and acidic residues. The segment covering 50–61 (TNGSGEQSKTSN) has biased composition (polar residues). Ser-74 carries the phosphoserine modification. Residue Thr-76 is modified to Phosphothreonine. Ser-90 and Ser-119 each carry phosphoserine. Residues 91–153 (EEKDEEDGEN…DGTSNRDSFR (63 aa)) form a disordered region. Over residues 123-146 (SDSMDSLYSGQSSSSGITSCSDGT) the composition is skewed to low complexity. The residue at position 160 (Tyr-160) is a Phosphotyrosine. In terms of domain architecture, SH3 spans 163 to 224 (PFCGRARVHT…KFIYVDVISE (62 aa)). Residues 241–305 (KKSKTLQEFL…LSAAENFLEE (65 aa)) form the SAM domain. The segment at 337-359 (DSGCYISSGNSDNGKEDLESENL) is disordered.

In terms of assembly, interacts with FASLG. Interacts with phosphotyrosine containing proteins. Interacts (via SH3 domain) with CTTN. Interacts (phosphorylated at Ser-23) with YWHAB, YWHAE, YWHAG, YWHAH, YWHAZ and SFN. Interacts directly with SAP30 and HDAC1. Identified in a complex with SAP30 and HDAC1. In terms of tissue distribution, detected in peripheral blood B-cells (at protein level). Detected in spleen, liver and peripheral blood.

The protein localises to the nucleus. The protein resides in the cytoplasm. It is found in the cell projection. It localises to the ruffle. Functionally, negative regulator of B-cell activation. Down-regulates cell proliferation (in vitro). Promotes RAC1-dependent membrane ruffle formation and reorganization of the actin cytoskeleton. Regulates cell spreading and cell polarization. Stimulates HDAC1 activity. Regulates LYN activity by modulating its tyrosine phosphorylation. The protein is SAM domain-containing protein SAMSN-1 (SAMSN1) of Homo sapiens (Human).